The chain runs to 317 residues: L-lactate dehydrogenase (317 aa).

NAD(+)-binding positions include V17, D38, K43, Y69, and 83–84 (GA). Positions 86 and 92 each coordinate substrate. Residues S105, 122-124 (ATN), and S147 contribute to the NAD(+) site. 124-127 (NPVD) contacts substrate. 152–155 (DTAR) is a substrate binding site. Beta-D-fructose 1,6-bisphosphate contacts are provided by R157 and H172. The active-site Proton acceptor is H179. The residue at position 224 (Y224) is a Phosphotyrosine. T233 provides a ligand contact to substrate.

The protein belongs to the LDH/MDH superfamily. LDH family. As to quaternary structure, homotetramer.

It is found in the cytoplasm. The enzyme catalyses (S)-lactate + NAD(+) = pyruvate + NADH + H(+). Its pathway is fermentation; pyruvate fermentation to lactate; (S)-lactate from pyruvate: step 1/1. Its activity is regulated as follows. Allosterically activated by fructose 1,6-bisphosphate (FBP). In terms of biological role, catalyzes the conversion of lactate to pyruvate. In Bacillus caldolyticus, this protein is L-lactate dehydrogenase.